The chain runs to 466 residues: 3-isopropylmalate dehydratase large subunit (466 aa).

The [4Fe-4S] cluster site is built by cysteine 347, cysteine 407, and cysteine 410.

Belongs to the aconitase/IPM isomerase family. LeuC type 1 subfamily. As to quaternary structure, heterodimer of LeuC and LeuD. The cofactor is [4Fe-4S] cluster.

It carries out the reaction (2R,3S)-3-isopropylmalate = (2S)-2-isopropylmalate. It functions in the pathway amino-acid biosynthesis; L-leucine biosynthesis; L-leucine from 3-methyl-2-oxobutanoate: step 2/4. Catalyzes the isomerization between 2-isopropylmalate and 3-isopropylmalate, via the formation of 2-isopropylmaleate. The protein is 3-isopropylmalate dehydratase large subunit of Vibrio vulnificus (strain YJ016).